The following is a 332-amino-acid chain: D-alanine--D-alanine ligase (332 aa).

A compositionally biased stretch (polar residues) spans 1-17 (MPMTMTQSATNPTATPV). The tract at residues 1-28 (MPMTMTQSATNPTATPVSANKASANAAT) is disordered. Residues 18–28 (SANKASANAAT) show a composition bias toward low complexity. The 198-residue stretch at 132-329 (KQLWHGCGLS…FEQLCWHILA (198 aa)) folds into the ATP-grasp domain. Position 158-213 (158-213 (VNTLGLPLIVKPVHEGSSIGMSKVNTLDELPKAYEVAAGCGDVVMAEKWITGREFT)) interacts with ATP. The Mg(2+) site is built by Asp283, Glu296, and Asn298.

The protein belongs to the D-alanine--D-alanine ligase family. The cofactor is Mg(2+). It depends on Mn(2+) as a cofactor.

It localises to the cytoplasm. It catalyses the reaction 2 D-alanine + ATP = D-alanyl-D-alanine + ADP + phosphate + H(+). Its pathway is cell wall biogenesis; peptidoglycan biosynthesis. In terms of biological role, cell wall formation. In Psychrobacter sp. (strain PRwf-1), this protein is D-alanine--D-alanine ligase.